The chain runs to 629 residues: Polygalacturonase non-catalytic subunit AroGP2 (629 aa).

Residues 1–27 form the signal peptide; it reads MHNKILVSSYILLVLLFSLSSFNIVVA. Positions 28–109 are excised as a propeptide; it reads KDGDESGNPF…MCAPDLLPSL (82 aa). 7 N-linked (GlcNAc...) asparagine glycosylation sites follow: N125, N143, N255, N277, N333, N368, and N386. Residues 267 to 293 are compositionally biased toward polar residues; the sequence is YGQNANGENQNFTSYSTNGNNPQNNFK. The segment at 267 to 305 is disordered; it reads YGQNANGENQNFTSYSTNGNNPQNNFKNYGVGGNGPSET. In terms of domain architecture, BURP spans 414–628; it reads FFREKMLKSG…FENDMTWATA (215 aa).

Interacts with polygalacturonase to form heterodimers.

Its subcellular location is the secreted. The protein localises to the extracellular space. It localises to the apoplast. It is found in the cell wall. In terms of biological role, non-catalytic subunit of polygalacturonase. This is Polygalacturonase non-catalytic subunit AroGP2 (GP2) from Solanum lycopersicum (Tomato).